Reading from the N-terminus, the 354-residue chain is Peripherin-2 (354 aa).

Topologically, residues 1 to 24 (MALLKVKFNQKKRVKLAQGLWLMN) are cytoplasmic. A helical membrane pass occupies residues 25 to 43 (WFSVFAGIIVFSMGLFLKI). Residues 44–61 (ELRKRSEVMDNSESHFVP) lie on the Lumenal side of the membrane. A helical membrane pass occupies residues 62–80 (NSLILMGILSCAFNGFAGK). Residues 81 to 99 (ICYDSLDPAKFAKWKPLLK) are Cytoplasmic-facing. A helical transmembrane segment spans residues 100-123 (PYLALCFFFNILLFFVALICFLMR). Residues 124–264 (GSLESTLAQG…LHYYSSMMSS (141 aa)) lie on the Lumenal side of the membrane. N-linked (GlcNAc...) asparagine glycosylation is present at asparagine 229. A helical transmembrane segment spans residues 265 to 290 (MGAVVLLVWLFEMSVMVGLRLLHTSL). The Cytoplasmic portion of the chain corresponds to 291 to 354 (ESIANPEDPE…GKTPAITTVS (64 aa)). Residues 335 to 354 (GAEGAEGEEAGKTPAITTVS) form a disordered region.

The protein belongs to the PRPH2/ROM1 family. In terms of assembly, homodimer; disulfide-linked.

It is found in the membrane. May be involved in the morphogenesis of retina outer segment disks and the development and maintenance of the retina ultrastructure. This is Peripherin-2 (PRPH2) from Gallus gallus (Chicken).